Here is a 65-residue protein sequence, read N- to C-terminus: Cytochrome b-c1 complex subunit 9, mitochondrial (65 aa).

A helical membrane pass occupies residues 14–34 (IYVATIFGGAFAFQGFFDVAV).

Belongs to the UQCR10/QCR9 family. As to quaternary structure, component of the ubiquinol-cytochrome c oxidoreductase (cytochrome b-c1 complex, complex III, CIII), a multisubunit enzyme composed of 10 subunits. The complex is composed of 3 respiratory subunits cytochrome b (COB), cytochrome c1 (CYT1) and Rieske protein (RIP1), 2 core protein subunits COR1 and QCR2, and 5 low-molecular weight protein subunits QCR6, QCR7, QCR8, QCR9 and QCR10. The complex exists as an obligatory dimer and forms supercomplexes (SCs) in the inner mitochondrial membrane with a monomer or a dimer of cytochrome c oxidase (complex IV, CIV), resulting in 2 different assemblies (supercomplexes III(2)IV and III(2)IV(2)).

It localises to the membrane. The protein localises to the mitochondrion inner membrane. Component of the ubiquinol-cytochrome c oxidoreductase, a multisubunit transmembrane complex that is part of the mitochondrial electron transport chain which drives oxidative phosphorylation. The complex plays an important role in the uptake of multiple carbon sources present in different host niches. This is Cytochrome b-c1 complex subunit 9, mitochondrial from Candida albicans (strain SC5314 / ATCC MYA-2876) (Yeast).